Consider the following 255-residue polypeptide: Hydroxyacylglutathione hydrolase (255 aa).

Zn(2+)-binding residues include His-56, His-58, Asp-60, His-61, His-114, Asp-133, and His-171.

It belongs to the metallo-beta-lactamase superfamily. Glyoxalase II family. As to quaternary structure, monomer. It depends on Zn(2+) as a cofactor.

The enzyme catalyses an S-(2-hydroxyacyl)glutathione + H2O = a 2-hydroxy carboxylate + glutathione + H(+). It functions in the pathway secondary metabolite metabolism; methylglyoxal degradation; (R)-lactate from methylglyoxal: step 2/2. Thiolesterase that catalyzes the hydrolysis of S-D-lactoyl-glutathione to form glutathione and D-lactic acid. In Cereibacter sphaeroides (strain ATCC 17025 / ATH 2.4.3) (Rhodobacter sphaeroides), this protein is Hydroxyacylglutathione hydrolase.